Reading from the N-terminus, the 222-residue chain is uncharacterized protein (222 aa).

4 helical membrane passes run 25–45 (LLWLFFTLLGLGVFGIMPATA), 80–100 (LLGAVLALIGVIIYIDLALIY), 111–131 (FAIMIFGFLFVSMLFYVFPLL), and 160–180 (LALTVALFFLLAYLPGIVPFF).

The protein localises to the cell membrane. This is an uncharacterized protein from Bacillus subtilis (strain 168).